A 330-amino-acid polypeptide reads, in one-letter code: Aspartate--ammonia ligase (330 aa).

It belongs to the class-II aminoacyl-tRNA synthetase family. AsnA subfamily.

The protein localises to the cytoplasm. The enzyme catalyses L-aspartate + NH4(+) + ATP = L-asparagine + AMP + diphosphate + H(+). Its pathway is amino-acid biosynthesis; L-asparagine biosynthesis; L-asparagine from L-aspartate (ammonia route): step 1/1. This is Aspartate--ammonia ligase from Actinobacillus succinogenes (strain ATCC 55618 / DSM 22257 / CCUG 43843 / 130Z).